A 649-amino-acid polypeptide reads, in one-letter code: Lysophospholipase (649 aa).

Positions 1 to 21 (MNLKEWLLFSDAVFFAQGTLA) are cleaved as a signal peptide. Residues Asn-32, Asn-51, Asn-77, Asn-90, Asn-121, Asn-158, Asn-168, Asn-213, Asn-275, Asn-343, Asn-386, Asn-457, Asn-487, Asn-511, Asn-539, Asn-563, and Asn-580 are each glycosylated (N-linked (GlcNAc...) asparagine). Residues 34-584 (SCDEDINLIR…TNYCWNGTID (551 aa)) form the PLA2c domain.

This sequence belongs to the lysophospholipase family.

The protein localises to the secreted. It catalyses the reaction a 1-acyl-sn-glycero-3-phosphocholine + H2O = sn-glycerol 3-phosphocholine + a fatty acid + H(+). Its function is as follows. Catalyzes the release of fatty acids from lysophospholipids. This is Lysophospholipase from Torulaspora delbrueckii (Yeast).